The sequence spans 307 residues: Ribonuclease Z (307 aa).

Zn(2+) is bound by residues H61, H63, D65, H66, H138, D208, and H264. D65 serves as the catalytic Proton acceptor.

The protein belongs to the RNase Z family. Homodimer. Zn(2+) serves as cofactor.

It catalyses the reaction Endonucleolytic cleavage of RNA, removing extra 3' nucleotides from tRNA precursor, generating 3' termini of tRNAs. A 3'-hydroxy group is left at the tRNA terminus and a 5'-phosphoryl group is left at the trailer molecule.. In terms of biological role, zinc phosphodiesterase, which displays some tRNA 3'-processing endonuclease activity. Probably involved in tRNA maturation, by removing a 3'-trailer from precursor tRNA. In Pyrococcus horikoshii (strain ATCC 700860 / DSM 12428 / JCM 9974 / NBRC 100139 / OT-3), this protein is Ribonuclease Z.